We begin with the raw amino-acid sequence, 101 residues long: Small ribosomal subunit protein uS14 (101 aa).

The protein belongs to the universal ribosomal protein uS14 family. As to quaternary structure, part of the 30S ribosomal subunit. Contacts proteins S3 and S10.

Its function is as follows. Binds 16S rRNA, required for the assembly of 30S particles and may also be responsible for determining the conformation of the 16S rRNA at the A site. This is Small ribosomal subunit protein uS14 from Psychromonas ingrahamii (strain DSM 17664 / CCUG 51855 / 37).